A 251-amino-acid polypeptide reads, in one-letter code: Tryptophan synthase alpha chain (251 aa).

Catalysis depends on proton acceptor residues Glu-46 and Asp-57.

The protein belongs to the TrpA family. As to quaternary structure, tetramer of two alpha and two beta chains.

It catalyses the reaction (1S,2R)-1-C-(indol-3-yl)glycerol 3-phosphate + L-serine = D-glyceraldehyde 3-phosphate + L-tryptophan + H2O. The protein operates within amino-acid biosynthesis; L-tryptophan biosynthesis; L-tryptophan from chorismate: step 5/5. In terms of biological role, the alpha subunit is responsible for the aldol cleavage of indoleglycerol phosphate to indole and glyceraldehyde 3-phosphate. This is Tryptophan synthase alpha chain from Karelsulcia muelleri (strain GWSS) (Sulcia muelleri).